The following is a 640-amino-acid chain: Threonine--tRNA ligase (640 aa).

The 61-residue stretch at M1 to T61 folds into the TGS domain. The catalytic stretch occupies residues D242–P533. Residues C333, H384, and H510 each contribute to the Zn(2+) site.

The protein belongs to the class-II aminoacyl-tRNA synthetase family. As to quaternary structure, homodimer. It depends on Zn(2+) as a cofactor.

The protein localises to the cytoplasm. It catalyses the reaction tRNA(Thr) + L-threonine + ATP = L-threonyl-tRNA(Thr) + AMP + diphosphate + H(+). Functionally, catalyzes the attachment of threonine to tRNA(Thr) in a two-step reaction: L-threonine is first activated by ATP to form Thr-AMP and then transferred to the acceptor end of tRNA(Thr). Also edits incorrectly charged L-seryl-tRNA(Thr). The protein is Threonine--tRNA ligase of Polynucleobacter asymbioticus (strain DSM 18221 / CIP 109841 / QLW-P1DMWA-1) (Polynucleobacter necessarius subsp. asymbioticus).